Consider the following 151-residue polypeptide: Trivalent organoarsenical cleaving enzyme (151 aa).

One can recognise a VOC domain in the interval 2 to 118; that stretch reads SRVQLALRVP…GGEPWEVYVV (117 aa). A Fe(2+)-binding site is contributed by Gln5. Asp61 is a binding site for roxarsone (III). His62 contributes to the Fe(2+) binding site. The roxarsone (III) site is built by Cys95 and Cys96. Glu114 lines the Fe(2+) pocket.

Monomer. Fe(2+) is required as a cofactor.

It carries out the reaction methylarsonous acid + AH2 + O2 = arsenite + methanol + A + H(+). The enzyme catalyses roxarsone (III) + AH2 + O2 = 4-hydroxy-3-nitrocyclohexa-2,5-dien-1-one + arsenite + A + H(+). It catalyses the reaction nitarsone (III) + AH2 + O2 = 4-nitrocyclohexa-2,5-dien-1-one + arsenite + A + H(+). The catalysed reaction is 4-aminophenylarsonous acid + AH2 + O2 = 4-aminocyclohexa-2,5-dien-1-one + arsenite + A. Its function is as follows. Nonheme iron-dependent dioxygenase that can break carbon-arsenic bonds, playing a role in the detoxification of environmental organoarsenical compounds. Catalyzes the oxygen-dependent demethylation of highly toxic methylarsonous acid (MAs(III)) to arsenite, which can then be exported out of the cell. Can also cleave the C-As bond in several trivalent aromatic arsenicals, including roxarsone (III), nitarsone (III) and (4-aminophenyl)arsonous acid. Organoarsenical degradation by this enzyme is proposed to have a significant impact on the arsenic biogeocycle that maintains a balance between organic and inorganic species. This is Trivalent organoarsenical cleaving enzyme from Thermomonospora curvata (strain ATCC 19995 / DSM 43183 / JCM 3096 / KCTC 9072 / NBRC 15933 / NCIMB 10081 / Henssen B9).